Reading from the N-terminus, the 75-residue chain is Large ribosomal subunit protein bL31 (75 aa).

Zn(2+) is bound by residues C16, C18, C37, and C40.

Belongs to the bacterial ribosomal protein bL31 family. Type A subfamily. Part of the 50S ribosomal subunit. Requires Zn(2+) as cofactor.

In terms of biological role, binds the 23S rRNA. The polypeptide is Large ribosomal subunit protein bL31 (Nitrosospira multiformis (strain ATCC 25196 / NCIMB 11849 / C 71)).